Here is a 427-residue protein sequence, read N- to C-terminus: 3-phosphoshikimate 1-carboxyvinyltransferase (427 aa).

Residues lysine 22, serine 23, and arginine 27 each contribute to the 3-phosphoshikimate site. Lysine 22 contacts phosphoenolpyruvate. The phosphoenolpyruvate site is built by glycine 96 and arginine 124. 3-phosphoshikimate-binding residues include serine 169, serine 170, glutamine 171, serine 197, aspartate 313, asparagine 336, and lysine 340. Glutamine 171 contacts phosphoenolpyruvate. Residue aspartate 313 is the Proton acceptor of the active site. Phosphoenolpyruvate contacts are provided by arginine 344, arginine 386, and lysine 411.

Belongs to the EPSP synthase family. Monomer.

The protein resides in the cytoplasm. It carries out the reaction 3-phosphoshikimate + phosphoenolpyruvate = 5-O-(1-carboxyvinyl)-3-phosphoshikimate + phosphate. Its pathway is metabolic intermediate biosynthesis; chorismate biosynthesis; chorismate from D-erythrose 4-phosphate and phosphoenolpyruvate: step 6/7. Functionally, catalyzes the transfer of the enolpyruvyl moiety of phosphoenolpyruvate (PEP) to the 5-hydroxyl of shikimate-3-phosphate (S3P) to produce enolpyruvyl shikimate-3-phosphate and inorganic phosphate. In Escherichia coli O9:H4 (strain HS), this protein is 3-phosphoshikimate 1-carboxyvinyltransferase.